A 308-amino-acid polypeptide reads, in one-letter code: UPF0282 protein M164_2122 (308 aa).

It belongs to the UPF0282 family.

The protein is UPF0282 protein M164_2122 of Saccharolobus islandicus (strain M.16.4 / Kamchatka #3) (Sulfolobus islandicus).